The following is a 307-amino-acid chain: Regulating synaptic membrane exocytosis protein 3 (307 aa).

The segment at 86-120 is disordered; the sequence is STETGIAVEMRSRVTRQGSRESTDGSTNSNSSEGT. Over residues 109 to 119 the composition is skewed to polar residues; the sequence is DGSTNSNSSEG. A C2 domain is found at 155 to 273; that stretch reads PMGDVHIAIM…DLSAVVTGWY (119 aa). Serine 294 and serine 297 each carry phosphoserine.

As to quaternary structure, binds PPFIA3. Does not bind RAB3. In terms of tissue distribution, expressed exclusively in brain with significant levels in cortex, cerebellum and olfactory bulb. Detected at lower level in hippocampus.

It localises to the synapse. In terms of biological role, regulates synaptic membrane exocytosis. The polypeptide is Regulating synaptic membrane exocytosis protein 3 (Rims3) (Rattus norvegicus (Rat)).